A 320-amino-acid chain; its full sequence is MSSMPNHQKVVLVGDGAVGSSYAFAMAQQGIAEEFVIVDVVKDRTKGDALDLEDAQAFTAPKKIYSGEYSDCKDADLVVITAGAPQKPGESRLDLVNKNLNILSSIVKPVVDSGFDGIFLVAANPVDILTYATWKFSGFPKDRVIGSGTSLDSSRLRVALGKQFNVDPRSVDAYIMGEHGDSEFAAYSTATIGTRPVRDVAKEQGVSDEDLAKLEDGVRNKAYDIINLKGATFYGIGTALMRISKAILRDENAVLPVGAYMDGQYGLNDIYIGTPAVIGGTGLKQIIESPLSADELKKMQDSAATLKKVLNDGLAELENK.

NAD(+) contacts are provided by residues Val-18, Asp-39, Arg-44, Tyr-69, and Gly-83–Ala-84. 2 residues coordinate substrate: Gln-86 and Arg-92. Residues Ser-105, Ala-122–Asn-124, and Ser-147 each bind NAD(+). Asn-124–Asp-127 serves as a coordination point for substrate. Asp-152–Arg-155 provides a ligand contact to substrate. His-179 acts as the Proton acceptor in catalysis. Phosphotyrosine is present on Tyr-223. Thr-232 is a binding site for substrate.

The protein belongs to the LDH/MDH superfamily. LDH family. Homotetramer.

The protein localises to the cytoplasm. It carries out the reaction (S)-lactate + NAD(+) = pyruvate + NADH + H(+). It participates in fermentation; pyruvate fermentation to lactate; (S)-lactate from pyruvate: step 1/1. In terms of biological role, catalyzes the conversion of lactate to pyruvate. The protein is L-lactate dehydrogenase 1 of Lactiplantibacillus plantarum (strain ATCC BAA-793 / NCIMB 8826 / WCFS1) (Lactobacillus plantarum).